Consider the following 358-residue polypeptide: Membrane-bound lytic murein transglycosylase C (358 aa).

Residues 1-16 (MKKILALLVIAPLLVS) form the signal peptide. A lipid anchor (N-palmitoyl cysteine) is attached at Cys17. The S-diacylglycerol cysteine moiety is linked to residue Cys17.

This sequence belongs to the transglycosylase Slt family.

It is found in the cell outer membrane. It catalyses the reaction Exolytic cleavage of the (1-&gt;4)-beta-glycosidic linkage between N-acetylmuramic acid (MurNAc) and N-acetylglucosamine (GlcNAc) residues in peptidoglycan, from either the reducing or the non-reducing ends of the peptidoglycan chains, with concomitant formation of a 1,6-anhydrobond in the MurNAc residue.. Its function is as follows. Murein-degrading enzyme. May play a role in recycling of muropeptides during cell elongation and/or cell division. This Yersinia enterocolitica serotype O:8 / biotype 1B (strain NCTC 13174 / 8081) protein is Membrane-bound lytic murein transglycosylase C.